A 304-amino-acid chain; its full sequence is Iron(III) enterobactin esterase (304 aa).

The first 25 residues, 1–25 (MRTSLLVAALGLALAAALPGGAPLA), serve as a signal peptide directing secretion. Residues Ser-182, Glu-242, and His-283 each act as charge relay system in the active site.

This sequence belongs to the esterase D family. As to quaternary structure, monomer.

The protein resides in the periplasm. It catalyses the reaction Fe(III)-enterobactin + 3 H2O + H(+) = Fe(III)-[N-(2,3-dihydroxybenzoyl)-L-serine] + 2 N-(2,3-dihydroxybenzoyl)-L-serine. It carries out the reaction Fe(III)-enterobactin + H2O = Fe(III)-[N-(2,3-dihydroxybenzoyl)-L-serine]3 + H(+). The enzyme catalyses Fe(III)-[N-(2,3-dihydroxybenzoyl)-L-serine]3 + H2O + H(+) = Fe(III)-[N-(2,3-dihydroxybenzoyl)-L-serine]2 + N-(2,3-dihydroxybenzoyl)-L-serine. The catalysed reaction is Fe(III)-[N-(2,3-dihydroxybenzoyl)-L-serine]2 + H2O + H(+) = Fe(III)-[N-(2,3-dihydroxybenzoyl)-L-serine] + N-(2,3-dihydroxybenzoyl)-L-serine. Its function is as follows. Catalyzes the hydrolysis of ferric enterobactin (Fe-Ent). Hydrolyzes Fe-Ent into three molecules of 2,3-dihydroxybenzoylserine (DHBS) still complexed with ferric iron. Iron reduction is necessary to obtain complete release of the metal from DHBS. It can hydrolyze salmochelin S4 (diglucosyl-C-Ent) but is not involved in iron acquisition by this siderophore. The protein is Iron(III) enterobactin esterase of Pseudomonas aeruginosa (strain ATCC 15692 / DSM 22644 / CIP 104116 / JCM 14847 / LMG 12228 / 1C / PRS 101 / PAO1).